The chain runs to 416 residues: Tyrosine--tRNA ligase (416 aa).

Tyr-40 serves as a coordination point for L-tyrosine. Residues 45–54 carry the 'HIGH' region motif; it reads ATAASLHVGH. Residues Tyr-177 and Gln-181 each contribute to the L-tyrosine site. A 'KMSKS' region motif is present at residues 237 to 241; that stretch reads KMGKS. Position 240 (Lys-240) interacts with ATP. Residues 351-416 form the S4 RNA-binding domain; sequence LSVTHFLVAA…RKKHKLVRLA (66 aa).

This sequence belongs to the class-I aminoacyl-tRNA synthetase family. TyrS type 1 subfamily. Homodimer.

The protein resides in the cytoplasm. It carries out the reaction tRNA(Tyr) + L-tyrosine + ATP = L-tyrosyl-tRNA(Tyr) + AMP + diphosphate + H(+). Catalyzes the attachment of tyrosine to tRNA(Tyr) in a two-step reaction: tyrosine is first activated by ATP to form Tyr-AMP and then transferred to the acceptor end of tRNA(Tyr). The sequence is that of Tyrosine--tRNA ligase from Cereibacter sphaeroides (strain ATCC 17025 / ATH 2.4.3) (Rhodobacter sphaeroides).